Here is a 379-residue protein sequence, read N- to C-terminus: Stimulator of interferon genes protein (379 aa).

The Cytoplasmic segment spans residues 1–17 (MPYSNLHPSIPRPRSYR). The interval 1–190 (MPYSNLHPSI…MFNQLHNNML (190 aa)) is mediates interaction with ZDHHC1 and ZDHHC11. The chain crosses the membrane as a helical span at residues 18–34 (FKLAAFVLLVGSLMSLW). The Lumenal segment spans residues 35–44 (MTGEPPSHTL). The helical transmembrane segment at 45–69 (HYLALHVASQQLGLLLKKLCCLAEE) threads the bilayer. At 70-91 (LCHVQSRYQGSYWKAVRACVGS) the chain is on the cytoplasmic side. Cys88 carries the S-palmitoyl cysteine lipid modification. Residues 92-106 (PICFMALILLSFYFY) traverse the membrane as a helical segment. Over 107-116 (CSLENTSDLR) the chain is Lumenal. The helical transmembrane segment at 117–134 (LAWHLGILVLSKSLSMTL) threads the bilayer. At 135-379 (DLQSLAPAEV…QPLPLRTDLI (245 aa)) the chain is on the cytoplasmic side. Lys151 is covalently cross-linked (Glycyl lysine isopeptide (Lys-Gly) (interchain with G-Cter in ubiquitin)). Residues 153 to 340 (FNVAHGLAWS…RHIRQEEKEE (188 aa)) form a cyclic dinucleotide-binding domain (CBD) region. 162-167 (SYYIGY) serves as a coordination point for 2',3'-cGAMP. Gly166 serves as a coordination point for 3',3'-c-di-GMP. Residue Tyr167 coordinates 2',3'-cUAMP. Lys236 participates in a covalent cross-link: Glycyl lysine isopeptide (Lys-Gly) (interchain with G-Cter in ubiquitin). A 2',3'-cUAMP-binding site is contributed by Arg238. Residues 238–241 (RAYS) and Thr263 each bind 2',3'-cGAMP. Residues 238 to 241 (RAYS) and Thr263 contribute to the 3',3'-c-di-GMP site. A Phosphoserine modification is found at Ser241. Residue Thr263 participates in 2',3'-cUAMP binding. Lys338 participates in a covalent cross-link: Glycyl lysine isopeptide (Lys-Gly) (interchain with G-Cter in SUMO). Residues 340–379 (EVTMSGPPTSVAPRPSLLSQEPRLLISGMEQPLPLRTDLI) are C-terminal tail (CTT). Ser355 carries the post-translational modification Phosphoserine. Phosphoserine; by TBK1 is present on residues Ser358 and Ser366. The pLxIS motif motif lies at 363 to 366 (LLIS).

The protein belongs to the STING family. As to quaternary structure, homodimer; forms a homodimer in absence of cyclic nucleotide (c-di-GMP or cGAMP); 'Lys-63'-linked ubiquitination at Lys-151 is required for homodimerization. Homotetramer; in presence of cyclic nucleotide (c-di-GMP or cGAMP), forms tetramers and higher-order oligomers through side-by-side packing. Interacts (when phosphorylated) with IRF3; following activation and phosphorylation on the pLxIS motif by TBK1, recruits IRF3. Interacts with RIGI, MAVS and SSR2. Interacts with RNF5 and TRIM56. Interacts with TBK1; when homodimer, leading to subsequent production of IFN-beta. Interacts with IFIT1 and IFIT2. Interacts with TRIM29; this interaction induces STING1 ubiquitination and subsequent degradation. Associates with the MHC-II complex. Interacts with STEEP1; interaction takes place upon cGAMP-activation and STING1 phosphorylation by MAP3K7/TAK1 and promotes STING1 translocation to COPII vesicles. Interacts with SEC24A, SEC24B and SEC24C; promoting translocation to COPII vesicles. Interacts (when ubiquitinated) with SQSTM1; leading to relocalization to autophagosomes. Interacts with SURF4. Interacts with HNRNPA2B1. Interacts with ZDHHC1; ZDHHC1 constitutively interacts with STING1 and in presence of DNA viruses activates it by promoting its cGAMP-induced oligomerization and the recruitment of downstream signaling components. Interacts with ZDHHC11; in presence of DNA viruses promotes the recruitment of IRF3 to STING1. Interacts with TOMM70. Interacts with TAB1; promoting recruitment of TAB1 to the endoplasmic reticulum membrane and subsequent activation of MAP3K7/TAK1. Interacts (via transmembrane domain) with TMEM203. Interacts with DDX41. Phosphorylation by TBK1 leads to activation and production of IFN-beta. Following cyclic nucleotide (c-di-GMP or cGAMP)-binding, activation and translocation from the endoplasmic reticulum, STING1 is phosphorylated by TBK1 at Ser-366 in the pLxIS motif. The phosphorylated pLxIS motif constitutes an IRF3-binding motif, leading to recruitment of the transcription factor IRF3 to induce type-I interferons and other cytokines. Phosphorylated on tyrosine residues upon MHC-II aggregation. Dephosphorylation by PPP6C leads to inactivation and decreased production of IFN-beta. Phosphorylation at Ser-358 is also required to activate IRF3. Phosphorylation at Ser-355 by MAP3K7/TAK1 facilitates its interaction with STEEP1, promoting STING1 translocation to COPII vesicles. In terms of processing, ubiquitinated. Ubiquitinated via 'Lys-63'-linked ubiquitin chains in response to double-stranded DNA treatment, leading to relocalization to autophagosomes and subsequent degradation; this process is dependent on SQSTM1. 'Lys-63'-linked ubiquitination mediated by TRIM56 at Lys-151 promotes homodimerization and recruitment of the antiviral kinase TBK1 and subsequent production of IFN-beta. 'Lys-48'-linked polyubiquitination at Lys-151 occurring after viral infection is mediated by RNF5 and leads to proteasomal degradation. 'Lys-11'-linked polyubiquitination at Lys-151 by RNF26 leads to stabilize STING1: it protects STING1 from RNF5-mediated 'Lys-48'-linked polyubiquitination. 'Lys-33'-linked and 'Lys-48'-linked deubiquitinated by USP20; leading to its stabilization and promotion of innate antiviral response. 'Lys-48'-linked deubiquitinated by USP44; leading to its stabilization and promotion of innate antiviral response. Deubiquitinated by USP13; leading to inhibition of innate antiviral response. 'Lys-63'-linked deubiquitinated by USP49; leading to inhibition of the subsequent recruitment of TBK1 to the signaling complex. 'Lys-63'-linked ubiquitination mediated by RNF39 promotes the activation of the cGAS-STING pathway. Post-translationally, sumoylated at Lys-338 by TRIM38 during the early phase of viral infection, promoting its stability by preventing its relocalization to autophagosomes and subsequent degradation. Desumoylated by SENP2 during the late phase of viral infection. Palmitoylation takes place in the Golgi apparatus and creates a platform for the recruitment of TBK1.

The protein localises to the endoplasmic reticulum membrane. Its subcellular location is the cytoplasm. It is found in the perinuclear region. It localises to the endoplasmic reticulum-Golgi intermediate compartment membrane. The protein resides in the golgi apparatus membrane. The protein localises to the cytoplasmic vesicle. Its subcellular location is the autophagosome membrane. It is found in the mitochondrion outer membrane. It localises to the cell membrane. It carries out the reaction H(+)(in) = H(+)(out). Its activity is regulated as follows. In contrast to mouse protein, not activated by anticancer molecule 5,6-dimethylxanthenone 4-acetic acid (DMXAA). Facilitator of innate immune signaling that acts as a sensor of cytosolic DNA from bacteria and viruses and promotes the production of type I interferon (IFN-alpha and IFN-beta). Innate immune response is triggered in response to non-CpG double-stranded DNA from viruses and bacteria delivered to the cytoplasm. Acts by binding cyclic dinucleotides: recognizes and binds cyclic di-GMP (c-di-GMP), a second messenger produced by bacteria, cyclic UMP-AMP (2',3'-cUAMP), and cyclic GMP-AMP (cGAMP), a messenger produced by CGAS in response to DNA virus in the cytosol. Upon binding to c-di-GMP, cUAMP or cGAMP, STING1 oligomerizes, translocates from the endoplasmic reticulum and is phosphorylated by TBK1 on the pLxIS motif, leading to recruitment and subsequent activation of the transcription factor IRF3 to induce expression of type I interferon and exert a potent anti-viral state. Exhibits 2',3' phosphodiester linkage-specific ligand recognition: can bind both 2'-3' linked cGAMP (2'-3'-cGAMP) and 3'-3' linked cGAMP but is preferentially activated by 2'-3' linked cGAMP. The preference for 2'-3'-cGAMP, compared to other linkage isomers is probably due to the ligand itself, whichs adopts an organized free-ligand conformation that resembles the STING1-bound conformation and pays low energy costs in changing into the active conformation. In addition to promote the production of type I interferons, plays a direct role in autophagy. Following cGAMP-binding, STING1 buds from the endoplasmic reticulum into COPII vesicles, which then form the endoplasmic reticulum-Golgi intermediate compartment (ERGIC). The ERGIC serves as the membrane source for WIPI2 recruitment and LC3 lipidation, leading to formation of autophagosomes that target cytosolic DNA or DNA viruses for degradation by the lysosome. Promotes autophagy by acting as a proton channel that directs proton efflux from the Golgi to facilitate MAP1LC3B/LC3B lipidation. The autophagy- and interferon-inducing activities can be uncoupled and autophagy induction is independent of TBK1 phosphorylation. Autophagy is also triggered upon infection by bacteria: following c-di-GMP-binding, which is produced by live Gram-positive bacteria, promotes reticulophagy. May be involved in translocon function, the translocon possibly being able to influence the induction of type I interferons. May be involved in transduction of apoptotic signals via its association with the major histocompatibility complex class II (MHC-II). The protein is Stimulator of interferon genes protein of Rattus norvegicus (Rat).